Reading from the N-terminus, the 280-residue chain is Urease accessory protein UreD (280 aa).

The protein belongs to the UreD family. As to quaternary structure, ureD, UreF and UreG form a complex that acts as a GTP-hydrolysis-dependent molecular chaperone, activating the urease apoprotein by helping to assemble the nickel containing metallocenter of UreC. The UreE protein probably delivers the nickel.

Its subcellular location is the cytoplasm. In terms of biological role, required for maturation of urease via the functional incorporation of the urease nickel metallocenter. The protein is Urease accessory protein UreD of Mesorhizobium japonicum (strain LMG 29417 / CECT 9101 / MAFF 303099) (Mesorhizobium loti (strain MAFF 303099)).